The sequence spans 75 residues: Nigwaprin-a (75 aa).

A signal peptide spans 1–24 (MSSGGLLLLLGLLTLWAELTPVSG). The WAP domain maps to 27–72 (RPVKPGLCPPRPQKPPCVKECKNDWSCRGEQKCCRYGCIYECRDPI). 4 cysteine pairs are disulfide-bonded: Cys-34–Cys-60, Cys-43–Cys-64, Cys-47–Cys-59, and Cys-53–Cys-68.

Belongs to the venom waprin family. In terms of tissue distribution, expressed by the venom gland.

It localises to the secreted. Damages membranes of susceptible bacteria. Has no hemolytic activity. Not toxic to mice. Does not inhibit the proteinases elastase and cathepsin G. The protein is Nigwaprin-a of Cryptophis nigrescens (Eastern small-eyed snake).